Here is a 563-residue protein sequence, read N- to C-terminus: 3-oxosteroid 1-dehydrogenase (563 aa).

7–36 serves as a coordination point for FAD; sequence DVVVVGSGAAGMVAALVAAHRGLSTVVVEK.

The protein belongs to the FAD-dependent oxidoreductase 2 family. 3-oxosteroid dehydrogenase subfamily. FAD is required as a cofactor.

It carries out the reaction a 3-oxosteroid + A = a 3-oxo-Delta(1)-steroid + AH2. The catalysed reaction is a 3-oxo-Delta(4)-steroid + A = a 3-oxo-Delta(1,4)-steroid + AH2. The enzyme catalyses 3-oxochol-4-en-22-oyl-CoA + NAD(+) = 3-oxochola-1,4-dien-22-oyl-CoA + NADH + H(+). Its function is as follows. Involved in the degradation of cholesterol. Catalyzes the elimination of the C-1 and C-2 hydrogen atoms of the A-ring from the polycyclic ring structure of 3-ketosteroids. Has a clear preference for 3-ketosteroids with a saturated A-ring, displaying highest activity on 5alpha-AD (5alpha-androstane-3,17-dione) and 5alpha-T (5alpha-testosterone, also known as 17beta-hydroxy-5alpha-androstane-3-one). Is also involved in the formation of 3-keto-1,4-diene-steroid from 3-keto-4-ene-steroid. Catalyzes the conversion of 3-oxo-23,24-bisnorchol-4-en-22-oyl-coenzyme A thioester (4-BNC-CoA) to 3-oxo-23,24-bisnorchola-1,4-dien-22-oyl-coenzyme A thioester (1,4-BNC-CoA). This is 3-oxosteroid 1-dehydrogenase (kstD) from Mycobacterium tuberculosis (strain ATCC 25618 / H37Rv).